The sequence spans 61 residues: Insect toxin AaHIT5 (61 aa).

An LCN-type CS-alpha/beta domain is found at 1-61 (DGYIKRHDGC…AWKSETNTCD (61 aa)). 4 cysteine pairs are disulfide-bonded: Cys-10-Cys-60, Cys-14-Cys-35, Cys-21-Cys-42, and Cys-25-Cys-44.

As to expression, expressed by the venom gland.

Its subcellular location is the secreted. Functionally, excitatory insect toxins induce a spastic paralysis. They bind voltage-independently to sodium channels (Nav) and shift the voltage of activation toward more negative potentials thereby affecting sodium channel activation and promoting spontaneous and repetitive firing. This toxin elicits excitatory activity with no flaccid paralysis despite its high degree of sequence similarity with other depressant insect toxins. This toxin is active only on insects. The protein is Insect toxin AaHIT5 of Androctonus australis (Sahara scorpion).